Reading from the N-terminus, the 252-residue chain is Imidazole glycerol phosphate synthase subunit HisF (252 aa).

Catalysis depends on residues Asp-11 and Asp-130.

This sequence belongs to the HisA/HisF family. As to quaternary structure, heterodimer of HisH and HisF.

The protein resides in the cytoplasm. The catalysed reaction is 5-[(5-phospho-1-deoxy-D-ribulos-1-ylimino)methylamino]-1-(5-phospho-beta-D-ribosyl)imidazole-4-carboxamide + L-glutamine = D-erythro-1-(imidazol-4-yl)glycerol 3-phosphate + 5-amino-1-(5-phospho-beta-D-ribosyl)imidazole-4-carboxamide + L-glutamate + H(+). The protein operates within amino-acid biosynthesis; L-histidine biosynthesis; L-histidine from 5-phospho-alpha-D-ribose 1-diphosphate: step 5/9. In terms of biological role, IGPS catalyzes the conversion of PRFAR and glutamine to IGP, AICAR and glutamate. The HisF subunit catalyzes the cyclization activity that produces IGP and AICAR from PRFAR using the ammonia provided by the HisH subunit. The sequence is that of Imidazole glycerol phosphate synthase subunit HisF from Acinetobacter baumannii (strain AB307-0294).